Consider the following 93-residue polypeptide: Phosphocarrier protein HPr (93 aa).

The HPr domain occupies 2–89; it reads AERRVNVGWA…KLVAEGLEEL (88 aa). His15 functions as the Pros-phosphohistidine intermediate in the catalytic mechanism.

The protein belongs to the HPr family.

It is found in the cytoplasm. Functionally, general (non sugar-specific) component of the phosphoenolpyruvate-dependent sugar phosphotransferase system (sugar PTS). This major carbohydrate active-transport system catalyzes the phosphorylation of incoming sugar substrates concomitantly with their translocation across the cell membrane. The phosphoryl group from phosphoenolpyruvate (PEP) is transferred to the phosphoryl carrier protein HPr by enzyme I. Phospho-HPr then transfers it to the PTS EIIA domain. The chain is Phosphocarrier protein HPr (ptsH) from Streptomyces coelicolor (strain ATCC BAA-471 / A3(2) / M145).